The following is a 140-amino-acid chain: MRRPNCIAEILRQHTQIIEESNNYYYLKMKTKDNKSQGPLRSLLCLPKNVNQKTDSAFCSVDGYNVKNKFLCTRSPNQDSLYQFWSMAYKKNIHIIVMLSPIDNLMRHRYWSLEEDEVFECREFRIRLRSSAQWIQFLKK.

The 140-residue stretch at 1–140 (MRRPNCIAEI…SAQWIQFLKK (140 aa)) folds into the Tyrosine-protein phosphatase domain.

Belongs to the protein-tyrosine phosphatase family.

The protein is Truncated tyrosine phosphatase D1 (D1) of Microplitis demolitor bracovirus (isolate Webb) (MdBV).